The primary structure comprises 517 residues: Cell division cycle protein 73 (517 aa).

Residues 124-135 show a composition bias toward basic and acidic residues; that stretch reads SEPEAKKPRLDG. 2 disordered regions span residues 124–159 and 306–326; these read SEPE…SAAK and GHHA…LAKP. Over residues 315 to 324 the composition is skewed to pro residues; sequence DAPPGRPPLA.

The protein belongs to the CDC73 family. As to quaternary structure, component of the PAF1 complex which consists of at least cdc-73, ctr-9, leo-1, pafo-1 and rtfo-1.

The protein resides in the nucleus. Component of the PAF1 complex which is a multifunctional complex involved in transcription initiation via genetic interactions with TATA-binding proteins, elongation and transcription-coupled histone modification. The polypeptide is Cell division cycle protein 73 (Caenorhabditis elegans).